The sequence spans 500 residues: Cytochrome P450 2D3 (500 aa).

C446 contacts heme.

Belongs to the cytochrome P450 family. Requires heme as cofactor.

The protein localises to the endoplasmic reticulum membrane. It localises to the microsome membrane. The catalysed reaction is an organic molecule + reduced [NADPH--hemoprotein reductase] + O2 = an alcohol + oxidized [NADPH--hemoprotein reductase] + H2O + H(+). Functionally, cytochromes P450 are a group of heme-thiolate monooxygenases. In liver microsomes, this enzyme is involved in an NADPH-dependent electron transport pathway. It oxidizes a variety of structurally unrelated compounds, including steroids, fatty acids, and xenobiotics. In Rattus norvegicus (Rat), this protein is Cytochrome P450 2D3 (Cyp2d3).